Here is a 379-residue protein sequence, read N- to C-terminus: UDP-4-amino-4-deoxy-L-arabinose--oxoglutarate aminotransferase (379 aa).

Position 182 is an N6-(pyridoxal phosphate)lysine (lysine 182).

The protein belongs to the DegT/DnrJ/EryC1 family. ArnB subfamily. As to quaternary structure, homodimer. Requires pyridoxal 5'-phosphate as cofactor.

The enzyme catalyses UDP-4-amino-4-deoxy-beta-L-arabinose + 2-oxoglutarate = UDP-beta-L-threo-pentopyranos-4-ulose + L-glutamate. The protein operates within nucleotide-sugar biosynthesis; UDP-4-deoxy-4-formamido-beta-L-arabinose biosynthesis; UDP-4-deoxy-4-formamido-beta-L-arabinose from UDP-alpha-D-glucuronate: step 2/3. It participates in bacterial outer membrane biogenesis; lipopolysaccharide biosynthesis. Catalyzes the conversion of UDP-4-keto-arabinose (UDP-Ara4O) to UDP-4-amino-4-deoxy-L-arabinose (UDP-L-Ara4N). The modified arabinose is attached to lipid A and is required for resistance to polymyxin and cationic antimicrobial peptides. This is UDP-4-amino-4-deoxy-L-arabinose--oxoglutarate aminotransferase from Escherichia coli (strain K12 / DH10B).